The primary structure comprises 144 residues: Large ribosomal subunit protein uL15 (144 aa).

The interval 1-57 (MELNNLKPAEGSKHAKRRVGRGIGSGLGKTAGRGHKGQKSRSGGFHKVGFEGGQMPL) is disordered. Residues 21–31 (RGIGSGLGKTA) are compositionally biased toward gly residues.

This sequence belongs to the universal ribosomal protein uL15 family. In terms of assembly, part of the 50S ribosomal subunit.

Binds to the 23S rRNA. This Paraburkholderia phytofirmans (strain DSM 17436 / LMG 22146 / PsJN) (Burkholderia phytofirmans) protein is Large ribosomal subunit protein uL15.